The following is a 447-amino-acid chain: N-succinylarginine dihydrolase (447 aa).

Substrate-binding positions include 19–28, asparagine 110, and 137–138; these read AGLSFGNEAS and HR. Residue glutamate 174 is part of the active site. Arginine 212 contributes to the substrate binding site. Residue histidine 248 is part of the active site. Positions 250 and 359 each coordinate substrate. Catalysis depends on cysteine 365, which acts as the Nucleophile.

It belongs to the succinylarginine dihydrolase family. As to quaternary structure, homodimer.

It carries out the reaction N(2)-succinyl-L-arginine + 2 H2O + 2 H(+) = N(2)-succinyl-L-ornithine + 2 NH4(+) + CO2. It participates in amino-acid degradation; L-arginine degradation via AST pathway; L-glutamate and succinate from L-arginine: step 2/5. Catalyzes the hydrolysis of N(2)-succinylarginine into N(2)-succinylornithine, ammonia and CO(2). This Escherichia coli O6:H1 (strain CFT073 / ATCC 700928 / UPEC) protein is N-succinylarginine dihydrolase.